Reading from the N-terminus, the 732-residue chain is Guanylate cyclase soluble subunit alpha-2 (732 aa).

The segment at 1–58 (MSRRKISSESFSSLGSDYLETSPEEEGECPLSRLCWNGSRSPPGPLEPSPAAAAAAAA) is disordered. Residues 49-58 (SPAAAAAAAA) are compositionally biased toward low complexity. Residues 521 to 648 (TMLFSDIVGF…NNVTLASKFE (128 aa)) enclose the Guanylate cyclase domain.

This sequence belongs to the adenylyl cyclase class-4/guanylyl cyclase family. As to quaternary structure, heterodimer of an alpha and a beta chain. In terms of tissue distribution, isoform 1 is expressed in fetal brain, liver, colon, endothelium and testis. Isoform 2 is expressed only in liver, colon and endothelium.

Its subcellular location is the cytoplasm. The catalysed reaction is GTP = 3',5'-cyclic GMP + diphosphate. With respect to regulation, activated by nitric oxide in the presence of magnesium or manganese ions. In terms of biological role, has guanylyl cyclase on binding to the beta-1 subunit. Functionally, isoform 2 acts as a negative regulator of guanylyl cyclase activity as it forms non-functional heterodimers with the beta subunits. This is Guanylate cyclase soluble subunit alpha-2 (GUCY1A2) from Homo sapiens (Human).